A 308-amino-acid chain; its full sequence is Alternaria stem canker resistance protein 1 (308 aa).

6 helical membrane passes run 21-41 (YQDLIFLLFFALFFPVLRFIL), 82-102 (FVYFLSTELLALSVTCNEPWF), 128-148 (LLYMYAGGFYFYSIFATLYWE), 165-185 (VSLIVLSYVYGFARIGSVVLA), 213-233 (FSLFALVFTSLRIICYPFWII), and 254-274 (IILYFVFNALLICLLVLHLFW). The TLC domain occupies 73-287 (NKFKESAWKF…ILRMVKNQIL (215 aa)).

It localises to the endoplasmic reticulum membrane. Functionally, mediates resistance to sphinganine-analog mycotoxins (SAMs) by restoring the sphingolipid biosynthesis. Could salvage the transport of GPI-anchored proteins from the endoplasmic reticulum to the Golgi apparatus in ceramides-depleted cells after SAM exposure. The sequence is that of Alternaria stem canker resistance protein 1 from Solanum lycopersicum (Tomato).